We begin with the raw amino-acid sequence, 124 residues long: S-adenosylmethionine decarboxylase proenzyme (124 aa).

Ser63 (schiff-base intermediate with substrate; via pyruvic acid) is an active-site residue. A Pyruvic acid (Ser); by autocatalysis modification is found at Ser63. Catalysis depends on His68, which acts as the Proton acceptor; for processing activity. Cys83 (proton donor; for catalytic activity) is an active-site residue.

This sequence belongs to the prokaryotic AdoMetDC family. Type 1 subfamily. Heterotetramer of two alpha and two beta chains arranged as a dimer of alpha/beta heterodimers. The cofactor is pyruvate. Is synthesized initially as an inactive proenzyme. Formation of the active enzyme involves a self-maturation process in which the active site pyruvoyl group is generated from an internal serine residue via an autocatalytic post-translational modification. Two non-identical subunits are generated from the proenzyme in this reaction, and the pyruvate is formed at the N-terminus of the alpha chain, which is derived from the carboxyl end of the proenzyme. The post-translation cleavage follows an unusual pathway, termed non-hydrolytic serinolysis, in which the side chain hydroxyl group of the serine supplies its oxygen atom to form the C-terminus of the beta chain, while the remainder of the serine residue undergoes an oxidative deamination to produce ammonia and the pyruvoyl group blocking the N-terminus of the alpha chain.

It carries out the reaction S-adenosyl-L-methionine + H(+) = S-adenosyl 3-(methylsulfanyl)propylamine + CO2. It participates in amine and polyamine biosynthesis; S-adenosylmethioninamine biosynthesis; S-adenosylmethioninamine from S-adenosyl-L-methionine: step 1/1. Its function is as follows. Catalyzes the decarboxylation of S-adenosylmethionine to S-adenosylmethioninamine (dcAdoMet), the propylamine donor required for the synthesis of the polyamines spermine and spermidine from the diamine putrescine. This Caldicellulosiruptor bescii (strain ATCC BAA-1888 / DSM 6725 / KCTC 15123 / Z-1320) (Anaerocellum thermophilum) protein is S-adenosylmethionine decarboxylase proenzyme.